The sequence spans 178 residues: Ribosome maturation factor RimP (178 aa).

The protein belongs to the RimP family.

It localises to the cytoplasm. Required for maturation of 30S ribosomal subunits. The protein is Ribosome maturation factor RimP of Caulobacter vibrioides (strain ATCC 19089 / CIP 103742 / CB 15) (Caulobacter crescentus).